We begin with the raw amino-acid sequence, 126 residues long: Aspartate 1-decarboxylase (126 aa).

Residue S25 is the Schiff-base intermediate with substrate; via pyruvic acid of the active site. At S25 the chain carries Pyruvic acid (Ser). Residue T57 coordinates substrate. Residue Y58 is the Proton donor of the active site. Residue 72–74 (GAA) coordinates substrate.

Belongs to the PanD family. As to quaternary structure, heterooctamer of four alpha and four beta subunits. The cofactor is pyruvate. In terms of processing, is synthesized initially as an inactive proenzyme, which is activated by self-cleavage at a specific serine bond to produce a beta-subunit with a hydroxyl group at its C-terminus and an alpha-subunit with a pyruvoyl group at its N-terminus.

The protein localises to the cytoplasm. It carries out the reaction L-aspartate + H(+) = beta-alanine + CO2. Its pathway is cofactor biosynthesis; (R)-pantothenate biosynthesis; beta-alanine from L-aspartate: step 1/1. Its function is as follows. Catalyzes the pyruvoyl-dependent decarboxylation of aspartate to produce beta-alanine. The polypeptide is Aspartate 1-decarboxylase (Campylobacter jejuni subsp. jejuni serotype O:6 (strain 81116 / NCTC 11828)).